Here is a 280-residue protein sequence, read N- to C-terminus: MAESHLDPSKLATGPAGFGAAAGQRPLAPLNAKIEVKNLNFFYNQFHALKNINLSIPEGKVTAFIGPSGCGKSTLLRTFNKMYALYPEQRAEGEIVMDGENLLQSKLDISLLRARIGMVFQKPTPFPMSIYDNIAFGVKMFERLTRSEMDDRVEWALTKAALWNEVKDKLSQSGYGLSGGQQQRLCIARGIAIRPEVLLLDEPCSALDPISTGRIEELIAELKSDYTVVIVTHNMQQAARCSDYTAYMYLGELIEFGETEKIFIKPARKETEDYITGRFG.

Residues 34–275 (IEVKNLNFFY…PARKETEDYI (242 aa)) enclose the ABC transporter domain. 66 to 73 (GPSGCGKS) lines the ATP pocket.

The protein belongs to the ABC transporter superfamily. Phosphate importer (TC 3.A.1.7) family. The complex is composed of two ATP-binding proteins (PstB), two transmembrane proteins (PstC and PstA) and a solute-binding protein (PstS).

Its subcellular location is the cell inner membrane. The catalysed reaction is phosphate(out) + ATP + H2O = ADP + 2 phosphate(in) + H(+). Its function is as follows. Part of the ABC transporter complex PstSACB involved in phosphate import. Responsible for energy coupling to the transport system. The chain is Phosphate import ATP-binding protein PstB from Burkholderia mallei (strain ATCC 23344).